Here is a 66-residue protein sequence, read N- to C-terminus: Large ribosomal subunit protein bL33c (66 aa).

The protein belongs to the bacterial ribosomal protein bL33 family.

It localises to the plastid. The protein resides in the chloroplast. The protein is Large ribosomal subunit protein bL33c of Populus alba (White poplar).